The primary structure comprises 86 residues: Large ribosomal subunit protein bL31B (86 aa).

It belongs to the bacterial ribosomal protein bL31 family. Type B subfamily. In terms of assembly, part of the 50S ribosomal subunit.

This Streptococcus agalactiae serotype Ia (strain ATCC 27591 / A909 / CDC SS700) protein is Large ribosomal subunit protein bL31B.